A 339-amino-acid chain; its full sequence is 2-halobenzoate 1,2-dioxygenase electron transfer component (339 aa).

One can recognise a 2Fe-2S ferredoxin-type domain in the interval 3-96 (HSIALRFEDD…DCVVRILASS (94 aa)). 4 residues coordinate [2Fe-2S] cluster: C40, C45, C48, and C80. Positions 98–336 (ACQVKKSTMT…NFYFEKFAPT (239 aa)) are ferredoxin-reductase. Positions 103–203 (KSTMTGQMTE…DGPYGAFYLR (101 aa)) constitute an FAD-binding FR-type domain.

Belongs to the bacterial ring-hydroxylating dioxygenase ferredoxin reductase family. As to quaternary structure, monomer. It is part of 2-halobenzoate dioxygenase two component enzyme system. The other component is a dioxygenase component consisting of 3 large (CbdA) subunits and 3 small (CbdB) subunits. Requires FAD as cofactor. The cofactor is [2Fe-2S] cluster.

The enzyme catalyses 2 reduced [2Fe-2S]-[ferredoxin] + NAD(+) + H(+) = 2 oxidized [2Fe-2S]-[ferredoxin] + NADH. It functions in the pathway xenobiotic degradation; benzoate degradation via CoA ligation. Its function is as follows. Electron transfer component of 2-halobenzoate 1,2-dioxygenase system. In Burkholderia cepacia (Pseudomonas cepacia), this protein is 2-halobenzoate 1,2-dioxygenase electron transfer component (cbdC).